A 549-amino-acid chain; its full sequence is Probable protein kinase UbiB (549 aa).

In terms of domain architecture, Protein kinase spans Asp-123 to Leu-501. ATP contacts are provided by residues Leu-129 to Val-137 and Lys-152. Asp-287 (proton acceptor) is an active-site residue. 2 helical membrane passes run His-496–Ile-516 and Ala-520–Trp-540.

Belongs to the ABC1 family. UbiB subfamily.

The protein resides in the cell inner membrane. It participates in cofactor biosynthesis; ubiquinone biosynthesis [regulation]. Its function is as follows. Is probably a protein kinase regulator of UbiI activity which is involved in aerobic coenzyme Q (ubiquinone) biosynthesis. In Shewanella baltica (strain OS185), this protein is Probable protein kinase UbiB.